A 174-amino-acid polypeptide reads, in one-letter code: ATP-dependent protease subunit HslV (174 aa).

Residue threonine 2 is part of the active site. 3 residues coordinate Na(+): glycine 157, cysteine 160, and threonine 163.

Belongs to the peptidase T1B family. HslV subfamily. As to quaternary structure, a double ring-shaped homohexamer of HslV is capped on each side by a ring-shaped HslU homohexamer. The assembly of the HslU/HslV complex is dependent on binding of ATP.

It localises to the cytoplasm. The enzyme catalyses ATP-dependent cleavage of peptide bonds with broad specificity.. Its activity is regulated as follows. Allosterically activated by HslU binding. Functionally, protease subunit of a proteasome-like degradation complex believed to be a general protein degrading machinery. The sequence is that of ATP-dependent protease subunit HslV from Shewanella piezotolerans (strain WP3 / JCM 13877).